A 266-amino-acid polypeptide reads, in one-letter code: Interleukin-1 beta (266 aa).

The propeptide occupies 1 to 113 (MAPVPEPINE…ETSSDEFLCD (113 aa)).

Belongs to the IL-1 family. Monomer. In its precursor form, weakly interacts with full-length MEFV; the mature cytokine does not interact at all. Interacts with integrins ITGAV:ITGBV and ITGA5:ITGB1; integrin-binding is required for IL1B signaling. Interacts with cargo receptor TMED10; the interaction is direct and is required for the secretion of IL1B mature form. Interacts with HSP90AB1; the interaction facilitates cargo translocation into the ERGIC. Interacts with HSP90B1; the interaction facilitates cargo translocation into the ERGIC.

The protein resides in the cytoplasm. It localises to the cytosol. Its subcellular location is the secreted. The protein localises to the lysosome. It is found in the extracellular exosome. Potent pro-inflammatory cytokine. Initially discovered as the major endogenous pyrogen, induces prostaglandin synthesis, neutrophil influx and activation, T-cell activation and cytokine production, B-cell activation and antibody production, and fibroblast proliferation and collagen production. Promotes Th17 differentiation of T-cells. Synergizes with IL12/interleukin-12 to induce IFNG synthesis from T-helper 1 (Th1) cells. Plays a role in angiogenesis by inducing VEGF production synergistically with TNF and IL6. Involved in transduction of inflammation downstream of pyroptosis: its mature form is specifically released in the extracellular milieu by passing through the gasdermin-D (GSDMD) pore. The sequence is that of Interleukin-1 beta (IL1B) from Cervus elaphus (Red deer).